The sequence spans 490 residues: UDP-N-acetylmuramate--L-alanine ligase (490 aa).

126 to 132 (GTHGKTT) contacts ATP.

Belongs to the MurCDEF family.

The protein localises to the cytoplasm. It carries out the reaction UDP-N-acetyl-alpha-D-muramate + L-alanine + ATP = UDP-N-acetyl-alpha-D-muramoyl-L-alanine + ADP + phosphate + H(+). It functions in the pathway cell wall biogenesis; peptidoglycan biosynthesis. Functionally, cell wall formation. In Sodalis glossinidius (strain morsitans), this protein is UDP-N-acetylmuramate--L-alanine ligase.